Consider the following 344-residue polypeptide: MSNAITMGIFWHLIGAASAACFYAPFKQVKQWSWETMWSVGGIVSWLILPWTISALLLPDFWAYYGQFNLSTLLPVFLFGAMWGIGNINYGLTMRYLGMSMGIGIAIGITLIVGTLMTPIINGNFDVLIHTEGGRMTLLGVFVALIGVGIVTRAGQLKERKMGIKAEEFNLKKGLLLAVICGIFSAGMSFAMNAAKPMHEAAAALGVDPLYVALPSYVVIMGGGALVNLGFCFIRLAKVQNLSIKADFSLARPLIISNILLSALGGLMWYLQFFFYAWGHARIPAQYDYMSWMLHMSFYVLCGGLVGLVLKEWKNAGRRPVAVLSLGCVVIIIAANIVGLGMAS.

A run of 10 helical transmembrane segments spans residues 4 to 24 (AITMGIFWHLIGAASAACFYA), 38 to 58 (WSVGGIVSWLILPWTISALLL), 68 to 88 (FNLSTLLPVFLFGAMWGIGNI), 101 to 121 (MGIGIAIGITLIVGTLMTPII), 137 to 157 (TLLGVFVALIGVGIVTRAGQL), 175 to 195 (LLLAVICGIFSAGMSFAMNAA), 214 to 234 (LPSYVVIMGGGALVNLGFCFI), 259 to 279 (ILLSALGGLMWYLQFFFYAWG), 290 to 310 (MSWMLHMSFYVLCGGLVGLVL), and 321 to 341 (VAVLSLGCVVIIIAANIVGLG).

Belongs to the L-rhamnose transporter (TC 2.A.7.6) family.

It is found in the cell inner membrane. The catalysed reaction is L-rhamnopyranose(in) + H(+)(in) = L-rhamnopyranose(out) + H(+)(out). Functionally, uptake of L-rhamnose across the cytoplasmic membrane with the concomitant transport of protons into the cell (symport system). This is L-rhamnose-proton symporter from Salmonella paratyphi A (strain ATCC 9150 / SARB42).